A 1555-amino-acid chain; its full sequence is UDP-glucose:glycoprotein glucosyltransferase 1 (1555 aa).

The N-terminal stretch at 1–42 (MGCKGDASGACAAGALPVTGVCYKMGVLVVLTVLWLFSSVKA) is a signal peptide. Residues Asn-536 and Asn-1228 are each glycosylated (N-linked (GlcNAc...) asparagine). The interval 1244–1555 (KTEEVKQDKD…REGPQKREEL (312 aa)) is glucosyltransferase. Ser-1277 bears the Phosphoserine mark. The disordered stretch occupies residues 1534-1555 (GALYKEKTKEPSREGPQKREEL). The Prevents secretion from ER signature appears at 1552–1555 (REEL).

It belongs to the glycosyltransferase 8 family. In terms of assembly, monomer as well as in a tight complex with SELENOF. Interacts with METTL23. Part of a large chaperone multiprotein complex comprising DNAJB11, HSP90B1, HSPA5, HYOU, PDIA2, PDIA4, PDIA6, PPIB, SDF2L1, UGGT1 and very small amounts of ERP29, but not, or at very low levels, CALR nor CANX. Ca(2+) serves as cofactor. Mn(2+) is required as a cofactor. Higher levels in pancreas, skeletal muscle, kidney, and brain. Low levels in lung and heart.

Its subcellular location is the endoplasmic reticulum lumen. The protein localises to the endoplasmic reticulum-Golgi intermediate compartment. The catalysed reaction is N(4)-(alpha-D-Man-(1-&gt;2)-alpha-D-Man-(1-&gt;2)-alpha-D-Man-(1-&gt;3)-[alpha-D-Man-(1-&gt;2)-alpha-D-Man-(1-&gt;3)-[alpha-D-Man-(1-&gt;2)-alpha-D-Man-(1-&gt;6)]-alpha-D-Man-(1-&gt;6)]-beta-D-Man-(1-&gt;4)-beta-D-GlcNAc-(1-&gt;4)-beta-D-GlcNAc)-L-asparaginyl-[protein] (N-glucan mannose isomer 9A1,2,3B1,2,3) + UDP-alpha-D-glucose = N(4)-(alpha-D-Glc-(1-&gt;3)-alpha-D-Man-(1-&gt;2)-alpha-D-Man-(1-&gt;2)-alpha-D-Man-(1-&gt;3)-[alpha-D-Man-(1-&gt;2)-alpha-D-Man-(1-&gt;3)-[alpha-D-Man-(1-&gt;2)-alpha-D-Man-(1-&gt;6)]-alpha-D-Man-(1-&gt;6)]-beta-D-Man-(1-&gt;4)-beta-D-GlcNAc-(1-&gt;4)-beta-D-GlcNAc)-L-asparaginyl-[protein] + UDP + H(+). Its pathway is protein modification; protein glycosylation. With respect to regulation, catalytic activity is enhanced by complex formation with SELENOF. Its function is as follows. Recognizes glycoproteins with minor folding defects. Reglucosylates single N-glycans near the misfolded part of the protein, thus providing quality control for protein folding in the endoplasmic reticulum. Reglucosylated proteins are recognized by calreticulin for recycling to the endoplasmic reticulum and refolding or degradation. In Homo sapiens (Human), this protein is UDP-glucose:glycoprotein glucosyltransferase 1 (UGGT1).